The following is a 426-amino-acid chain: Glutamate-1-semialdehyde 2,1-aminomutase (426 aa).

The residue at position 265 (Lys265) is an N6-(pyridoxal phosphate)lysine.

Belongs to the class-III pyridoxal-phosphate-dependent aminotransferase family. HemL subfamily. As to quaternary structure, homodimer. The cofactor is pyridoxal 5'-phosphate.

The protein localises to the cytoplasm. It carries out the reaction (S)-4-amino-5-oxopentanoate = 5-aminolevulinate. Its pathway is porphyrin-containing compound metabolism; protoporphyrin-IX biosynthesis; 5-aminolevulinate from L-glutamyl-tRNA(Glu): step 2/2. The chain is Glutamate-1-semialdehyde 2,1-aminomutase from Escherichia coli O139:H28 (strain E24377A / ETEC).